Here is a 327-residue protein sequence, read N- to C-terminus: tRNA dimethylallyltransferase (327 aa).

18 to 25 (GPTASGKT) is a binding site for ATP. 20-25 (TASGKT) contacts substrate. Interaction with substrate tRNA regions lie at residues 43–46 (DSAL), 167–171 (QRVQR), and 251–256 (RCVGYR).

The protein belongs to the IPP transferase family. As to quaternary structure, monomer. Mg(2+) serves as cofactor.

It catalyses the reaction adenosine(37) in tRNA + dimethylallyl diphosphate = N(6)-dimethylallyladenosine(37) in tRNA + diphosphate. In terms of biological role, catalyzes the transfer of a dimethylallyl group onto the adenine at position 37 in tRNAs that read codons beginning with uridine, leading to the formation of N6-(dimethylallyl)adenosine (i(6)A). The chain is tRNA dimethylallyltransferase from Methylibium petroleiphilum (strain ATCC BAA-1232 / LMG 22953 / PM1).